We begin with the raw amino-acid sequence, 428 residues long: Mitochondrial distribution and morphology protein 12 (428 aa).

The SMP-LTD domain occupies 1 to 387 (MSFDINWNQL…WPSWICIDMN (387 aa)). Disordered stretches follow at residues 75–168 (VMNE…APPL) and 387–428 (NDDD…EAGE). Residues 81 to 96 (NDSKDEHLKNHGDGIN) show a composition bias toward basic and acidic residues. Residues 106-133 (LDDEDEDDEDDDEDDEDEEEEDEDDYDD) show a composition bias toward acidic residues. Polar residues predominate over residues 146–161 (LNFNENSTTPSANSFA). Residues 387–403 (NDDDDEEEEEEESEDND) show a composition bias toward acidic residues. Residues 412 to 428 (NDGKHGDGRTDETEAGE) are compositionally biased toward basic and acidic residues.

This sequence belongs to the MDM12 family. In terms of assembly, component of the ER-mitochondria encounter structure (ERMES) or MDM complex, composed of MMM1, MDM10, MDM12 and MDM34. An MMM1 homodimer associates with one molecule of MDM12 on each side in a pairwise head-to-tail manner, and the SMP-LTD domains of MMM1 and MDM12 generate a continuous hydrophobic tunnel for phospholipid trafficking.

Its subcellular location is the mitochondrion outer membrane. It localises to the endoplasmic reticulum membrane. Component of the ERMES/MDM complex, which serves as a molecular tether to connect the endoplasmic reticulum (ER) and mitochondria. Components of this complex are involved in the control of mitochondrial shape and protein biogenesis, and function in nonvesicular lipid trafficking between the ER and mitochondria. MDM12 is required for the interaction of the ER-resident membrane protein MMM1 and the outer mitochondrial membrane-resident beta-barrel protein MDM10. The MDM12-MMM1 subcomplex functions in the major beta-barrel assembly pathway that is responsible for biogenesis of all mitochondrial outer membrane beta-barrel proteins, and acts in a late step after the SAM complex. The MDM10-MDM12-MMM1 subcomplex further acts in the TOM40-specific pathway after the action of the MDM12-MMM1 complex. Essential for establishing and maintaining the structure of mitochondria and maintenance of mtDNA nucleoids. The sequence is that of Mitochondrial distribution and morphology protein 12 from Candida albicans (strain SC5314 / ATCC MYA-2876) (Yeast).